Consider the following 228-residue polypeptide: MPTNCAAAGCATTYNKHINISFHRFPLDPKRRKEWVRLVRRKNFVPGKHTFLCSKHFEASCFDLTGQTRRLKMDAVPTIFDFCTHIKSMKLKSRNLLKKNNSCSPAGPSNLKSNISSQQVLLEHSYAFRNPMEAKKRIIKLEKEIASLRRKMKTCLQKERRATRRWIKATCLVKNLEANSVLPKGTSEHMLPTALSSLPLEDFKILEQDQQDKTLLSLNLKQTKSTFI.

A THAP-type zinc finger spans residues 1–80 (MPTNCAAAGC…LKMDAVPTIF (80 aa)). The HCFC1-binding motif (HBM) signature appears at 123 to 126 (EHSY).

The polypeptide is THAP domain-containing protein 2 (THAP2) (Homo sapiens (Human)).